A 1600-amino-acid polypeptide reads, in one-letter code: E3 ubiquitin-protein ligase listerin (1600 aa).

HEAT repeat units follow at residues 31 to 65, 114 to 150, 161 to 202, 245 to 288, 291 to 344, 526 to 606, 853 to 904, 962 to 986, 1045 to 1083, 1289 to 1324, and 1325 to 1369; these read SSVP…CVKK, KTLP…DSDQ, GKLL…SSMA, YQLV…DLLR, ISVT…PDYA, RNYK…AALS, YTTN…DIRT, YASK…GAKF, LYNV…WVQT, VDVR…KADN, and SLNA…EEGT. The RING-type; degenerate zinc finger occupies 1537–1583; it reads CPICYAVVSADKKLPDKRCSTCNNLFHRLCLYKWFQNSNKNTCPLCR.

It belongs to the LTN1 family. Component of the ribosome quality control complex (RQC), composed of the E3 ubiquitin ligase RKR1/LTN1, RQC1 and RQC2, as well as CDC48 and its ubiquitin-binding cofactors associated with the 60S ribosomal subunits.

The protein localises to the nucleus. The protein resides in the cytoplasm. It is found in the cytosol. The enzyme catalyses S-ubiquitinyl-[E2 ubiquitin-conjugating enzyme]-L-cysteine + [acceptor protein]-L-lysine = [E2 ubiquitin-conjugating enzyme]-L-cysteine + N(6)-ubiquitinyl-[acceptor protein]-L-lysine.. Its pathway is protein modification; protein ubiquitination. Its function is as follows. E3 ubiquitin-protein ligase component of the ribosome quality control complex (RQC), a ribosome-associated complex that mediates ubiquitination and extraction of incompletely synthesized nascent chains for proteasomal degradation. Mediates ubiquitination of proteins derived from mRNAs lacking stop codons (non-stop proteins) and other translation arrest products induced by poly-lysine sequences and tandem rare codons. Ubiquitination leads to CDC48 recruitment for extraction and degradation of the incomplete translation product. May indirectly play a role in chromatin function and transcription. This chain is E3 ubiquitin-protein ligase listerin (rkr-1), found in Neurospora crassa (strain ATCC 24698 / 74-OR23-1A / CBS 708.71 / DSM 1257 / FGSC 987).